A 316-amino-acid polypeptide reads, in one-letter code: Putative mannose-6-phosphate isomerase YvyI (316 aa).

Positions 98, 116, and 173 each coordinate Zn(2+). The active site involves Arg-193.

Belongs to the mannose-6-phosphate isomerase type 1 family. The cofactor is Zn(2+).

The enzyme catalyses D-mannose 6-phosphate = D-fructose 6-phosphate. The chain is Putative mannose-6-phosphate isomerase YvyI (yvyI) from Bacillus subtilis (strain 168).